The following is a 787-amino-acid chain: Phenylalanine--tRNA ligase beta subunit (787 aa).

The 111-residue stretch at Ala-39–Arg-149 folds into the tRNA-binding domain. The region spanning Pro-400–Asp-475 is the B5 domain. Residues Asp-453, Asp-459, Glu-462, and Glu-463 each contribute to the Mg(2+) site. The FDX-ACB domain occupies Ser-694–Arg-786.

The protein belongs to the phenylalanyl-tRNA synthetase beta subunit family. Type 1 subfamily. In terms of assembly, tetramer of two alpha and two beta subunits. Mg(2+) serves as cofactor.

Its subcellular location is the cytoplasm. The catalysed reaction is tRNA(Phe) + L-phenylalanine + ATP = L-phenylalanyl-tRNA(Phe) + AMP + diphosphate + H(+). This chain is Phenylalanine--tRNA ligase beta subunit, found in Neisseria gonorrhoeae (strain ATCC 700825 / FA 1090).